A 132-amino-acid polypeptide reads, in one-letter code: MVNDTISDMLTRIRNANMVKHQIVQIPASKMSLAIAEILKQEGFIGDFETYSENEKKYLLISLKYVGKLRKPVICKIERVSKPGLRVYSNSKKLPRILDNLGIAIISTSKGVMTNLKAKELGIGGEVLCYIW.

This sequence belongs to the universal ribosomal protein uS8 family. Part of the 30S ribosomal subunit.

It is found in the plastid. The protein localises to the chloroplast. In terms of biological role, one of the primary rRNA binding proteins, it binds directly to 16S rRNA central domain where it helps coordinate assembly of the platform of the 30S subunit. In Phaeodactylum tricornutum (strain CCAP 1055/1), this protein is Small ribosomal subunit protein uS8c (rps8).